Here is a 167-residue protein sequence, read N- to C-terminus: Urease accessory protein UreE (167 aa).

The protein belongs to the UreE family.

The protein resides in the cytoplasm. Its function is as follows. Involved in urease metallocenter assembly. Binds nickel. Probably functions as a nickel donor during metallocenter assembly. This Pseudomonas paraeruginosa (strain DSM 24068 / PA7) (Pseudomonas aeruginosa (strain PA7)) protein is Urease accessory protein UreE.